Reading from the N-terminus, the 174-residue chain is uncharacterized protein (174 aa).

Transmembrane regions (helical) follow at residues 29–51 and 66–83; these read FAVELIPAINYFIFVGLCFGFWY and VIVIFGIPFFLTMLVTKI.

Its subcellular location is the cell membrane. This is an uncharacterized protein from Bacillus subtilis (strain 168).